A 374-amino-acid chain; its full sequence is Protein-glutamate methylesterase/protein-glutamine glutaminase 1 (374 aa).

The Response regulatory domain maps to 4–121; it reads KVLVVDDSSF…ATNKDEAILL (118 aa). The residue at position 55 (aspartate 55) is a 4-aspartylphosphate. A disordered region spans residues 141-170; that stretch reads PSVAPVTPRPTTGSAVGNATTPVQSASAPV. The segment covering 149-167 has biased composition (polar residues); it reads RPTTGSAVGNATTPVQSAS. The 201-residue stretch at 174-374 folds into the CheB-type methylesterase domain; that stretch reads PLSSIRASGK…ESILKESARG (201 aa). Catalysis depends on residues serine 193, histidine 220, and aspartate 316.

This sequence belongs to the CheB family. In terms of processing, phosphorylated by CheA. Phosphorylation of the N-terminal regulatory domain activates the methylesterase activity.

Its subcellular location is the cytoplasm. It catalyses the reaction [protein]-L-glutamate 5-O-methyl ester + H2O = L-glutamyl-[protein] + methanol + H(+). It carries out the reaction L-glutaminyl-[protein] + H2O = L-glutamyl-[protein] + NH4(+). Involved in chemotaxis. Part of a chemotaxis signal transduction system that modulates chemotaxis in response to various stimuli. Catalyzes the demethylation of specific methylglutamate residues introduced into the chemoreceptors (methyl-accepting chemotaxis proteins or MCP) by CheR. Also mediates the irreversible deamidation of specific glutamine residues to glutamic acid. This Shewanella oneidensis (strain ATCC 700550 / JCM 31522 / CIP 106686 / LMG 19005 / NCIMB 14063 / MR-1) protein is Protein-glutamate methylesterase/protein-glutamine glutaminase 1.